A 158-amino-acid chain; its full sequence is Transcription antitermination protein NusB (158 aa).

A compositionally biased stretch (polar residues) spans 1 to 13 (MSEAGDTSPQPGK). A disordered region spans residues 1-24 (MSEAGDTSPQPGKTGQPKAGDRRR).

This sequence belongs to the NusB family.

Involved in transcription antitermination. Required for transcription of ribosomal RNA (rRNA) genes. Binds specifically to the boxA antiterminator sequence of the ribosomal RNA (rrn) operons. The polypeptide is Transcription antitermination protein NusB (Marinobacter nauticus (strain ATCC 700491 / DSM 11845 / VT8) (Marinobacter aquaeolei)).